We begin with the raw amino-acid sequence, 657 residues long: UvrABC system protein B (657 aa).

The Helicase ATP-binding domain occupies 23–414 (KSIKKGNKYQ…KENIFHQIMR (392 aa)). 36-43 (GVTGSGKT) is a binding site for ATP. Residues 89-112 (YYDYYQPEAYIPRTDVFIEKDSST) carry the Beta-hairpin motif. One can recognise a Helicase C-terminal domain in the interval 431 to 593 (QVEILFDEAK…ITPTSVKRHI (163 aa)). The region spanning 622–657 (AKLAKELRKQMLEAAKALEFEKAAAIRDEINKLRDL) is the UVR domain.

Belongs to the UvrB family. As to quaternary structure, forms a heterotetramer with UvrA during the search for lesions. Interacts with UvrC in an incision complex.

The protein resides in the cytoplasm. Functionally, the UvrABC repair system catalyzes the recognition and processing of DNA lesions. A damage recognition complex composed of 2 UvrA and 2 UvrB subunits scans DNA for abnormalities. Upon binding of the UvrA(2)B(2) complex to a putative damaged site, the DNA wraps around one UvrB monomer. DNA wrap is dependent on ATP binding by UvrB and probably causes local melting of the DNA helix, facilitating insertion of UvrB beta-hairpin between the DNA strands. Then UvrB probes one DNA strand for the presence of a lesion. If a lesion is found the UvrA subunits dissociate and the UvrB-DNA preincision complex is formed. This complex is subsequently bound by UvrC and the second UvrB is released. If no lesion is found, the DNA wraps around the other UvrB subunit that will check the other stand for damage. The protein is UvrABC system protein B of Campylobacter jejuni (strain RM1221).